The sequence spans 112 residues: Ig kappa chain V-III region PC 7132 (112 aa).

Residues 1–23 (DIVLTQSPASLAVSLGQRATISC) are framework-1. Cysteines 23 and 92 form a disulfide. The tract at residues 24 to 38 (RASESVDNYGISFMN) is complementarity-determining-1. Positions 39–53 (WFQQKPGQPPKLLIY) are framework-2. The segment at 54-60 (AASNQGS) is complementarity-determining-2. The segment at 61 to 92 (GVPARFSGSGSGTDFSLNIHPMEEDDTAMYFC) is framework-3. The tract at residues 93 to 102 (QQSKEVPPYT) is complementarity-determining-3. Residues 103–112 (FGGGTKLEIK) form a framework-4 region.

The sequence is that of Ig kappa chain V-III region PC 7132 from Mus musculus (Mouse).